Reading from the N-terminus, the 325-residue chain is Quinone oxidoreductase (325 aa).

This sequence belongs to the zinc-containing alcohol dehydrogenase family. Quinone oxidoreductase subfamily.

The catalysed reaction is 2 a quinone + NADPH + H(+) = 2 a 1,4-benzosemiquinone + NADP(+). This is Quinone oxidoreductase (qor) from Pseudomonas aeruginosa (strain ATCC 15692 / DSM 22644 / CIP 104116 / JCM 14847 / LMG 12228 / 1C / PRS 101 / PAO1).